The following is a 218-amino-acid chain: N-(5'-phosphoribosyl)anthranilate isomerase (218 aa).

It belongs to the TrpF family.

The enzyme catalyses N-(5-phospho-beta-D-ribosyl)anthranilate = 1-(2-carboxyphenylamino)-1-deoxy-D-ribulose 5-phosphate. The protein operates within amino-acid biosynthesis; L-tryptophan biosynthesis; L-tryptophan from chorismate: step 3/5. The sequence is that of N-(5'-phosphoribosyl)anthranilate isomerase from Bordetella pertussis (strain Tohama I / ATCC BAA-589 / NCTC 13251).